Reading from the N-terminus, the 347-residue chain is NADH-ubiquinone oxidoreductase chain 2 (347 aa).

A run of 11 helical transmembrane segments spans residues 3-23 (PPIF…VMTS), 25-45 (HWML…PILM), 59-79 (YFLT…INLL), 96-116 (ILMT…FWVP), 122-142 (IPLS…LSVL), 149-169 (INPN…GWGG), 178-198 (ILAY…LYNP), 201-221 (MILN…LFML), 237-257 (MPLI…LPPL), 274-294 (EMII…YFYM), and 325-345 (FLPP…MISI).

Belongs to the complex I subunit 2 family. Core subunit of respiratory chain NADH dehydrogenase (Complex I) which is composed of 45 different subunits. Interacts with TMEM242.

The protein localises to the mitochondrion inner membrane. It carries out the reaction a ubiquinone + NADH + 5 H(+)(in) = a ubiquinol + NAD(+) + 4 H(+)(out). In terms of biological role, core subunit of the mitochondrial membrane respiratory chain NADH dehydrogenase (Complex I) which catalyzes electron transfer from NADH through the respiratory chain, using ubiquinone as an electron acceptor. Essential for the catalytic activity and assembly of complex I. The polypeptide is NADH-ubiquinone oxidoreductase chain 2 (Genetta servalina (Servaline genet)).